We begin with the raw amino-acid sequence, 229 residues long: Triosephosphate isomerase (229 aa).

9–11 (NLK) contributes to the substrate binding site. Catalysis depends on histidine 93, which acts as the Electrophile. Residue glutamate 141 is the Proton acceptor of the active site. Residues isoleucine 146, glycine 181, and 202–203 (AS) contribute to the substrate site.

The protein belongs to the triosephosphate isomerase family. Homotetramer; dimer of dimers.

The protein localises to the cytoplasm. It catalyses the reaction D-glyceraldehyde 3-phosphate = dihydroxyacetone phosphate. The protein operates within carbohydrate biosynthesis; gluconeogenesis. It functions in the pathway carbohydrate degradation; glycolysis; D-glyceraldehyde 3-phosphate from glycerone phosphate: step 1/1. In terms of biological role, involved in the gluconeogenesis. Catalyzes stereospecifically the conversion of dihydroxyacetone phosphate (DHAP) to D-glyceraldehyde-3-phosphate (G3P). This is Triosephosphate isomerase from Pyrobaculum islandicum (strain DSM 4184 / JCM 9189 / GEO3).